A 119-amino-acid chain; its full sequence is Protein TusC (119 aa).

Belongs to the DsrF/TusC family. In terms of assembly, heterohexamer, formed by a dimer of trimers. The hexameric TusBCD complex contains 2 copies each of TusB, TusC and TusD. The TusBCD complex interacts with TusE.

The protein localises to the cytoplasm. Its function is as follows. Part of a sulfur-relay system required for 2-thiolation of 5-methylaminomethyl-2-thiouridine (mnm(5)s(2)U) at tRNA wobble positions. This chain is Protein TusC, found in Buchnera aphidicola subsp. Baizongia pistaciae (strain Bp).